The sequence spans 356 residues: S-adenosylmethionine:tRNA ribosyltransferase-isomerase (356 aa).

Belongs to the QueA family. Monomer.

It is found in the cytoplasm. The catalysed reaction is 7-aminomethyl-7-carbaguanosine(34) in tRNA + S-adenosyl-L-methionine = epoxyqueuosine(34) in tRNA + adenine + L-methionine + 2 H(+). Its pathway is tRNA modification; tRNA-queuosine biosynthesis. Its function is as follows. Transfers and isomerizes the ribose moiety from AdoMet to the 7-aminomethyl group of 7-deazaguanine (preQ1-tRNA) to give epoxyqueuosine (oQ-tRNA). This is S-adenosylmethionine:tRNA ribosyltransferase-isomerase from Escherichia fergusonii (strain ATCC 35469 / DSM 13698 / CCUG 18766 / IAM 14443 / JCM 21226 / LMG 7866 / NBRC 102419 / NCTC 12128 / CDC 0568-73).